The chain runs to 351 residues: Caveolin-2 (351 aa).

Residues 1–14 show a composition bias toward polar residues; the sequence is MTRQNTSESDNTQR. Disordered regions lie at residues 1-55, 71-93, and 144-193; these read MTRQ…QGIA, HRTS…YDNL, and QKGS…PEME. Residues 1–261 are Cytoplasmic-facing; sequence MTRQNTSESD…FEIVRIYSYK (261 aa). Over residues 22–31 the composition is skewed to acidic residues; sequence TVDDIDELTD. A compositionally biased stretch (basic residues) spans 38–51; that stretch reads HHHHHHHHEHHHQH. Over residues 167–184 the composition is skewed to low complexity; the sequence is PAQQSAPPTQQSRPQTTS. Residues 262–290 constitute an intramembrane region (helical); sequence ILTLIFGLIIAFLGGILFALFAFLNIWIF. The Cytoplasmic segment spans residues 291-351; that stretch reads RPILILTRMA…EVWEKHIHHV (61 aa).

The protein belongs to the caveolin family. As to quaternary structure, homooligomer. Expressed in intracellular bodies in intestinal cells.

The protein resides in the golgi apparatus membrane. The protein localises to the cell membrane. It is found in the membrane. It localises to the caveola. Its subcellular location is the apical cell membrane. Functionally, may act as a scaffolding protein within caveolar membranes. Interacts directly with G-protein alpha subunits and can regulate their activity. Thought to have a role in the uptake of lipids and proteins in the intestinal cells; operates in the apical uptake of lipid markers and trafficking of yolk proteins. Affects fecundity and egg laying. This is Caveolin-2 (cav-2) from Caenorhabditis elegans.